We begin with the raw amino-acid sequence, 123 residues long: Basic phospholipase A2 Ph-TX1 (123 aa).

Ca(2+) is bound by residues Tyr27, Gly29, and Gly31. 6 disulfides stabilise this stretch: Cys28/Cys45, Cys44/Cys96, Cys50/Cys123, Cys51/Cys89, Cys59/Cys83, and Cys77/Cys87. The active site involves His48. Ca(2+) is bound at residue Asp49. The active site involves Asp90.

It belongs to the phospholipase A2 family. Group II subfamily. D49 sub-subfamily. Monomer. Ca(2+) is required as a cofactor. Expressed by the venom gland.

Its subcellular location is the secreted. The catalysed reaction is a 1,2-diacyl-sn-glycero-3-phosphocholine + H2O = a 1-acyl-sn-glycero-3-phosphocholine + a fatty acid + H(+). Inhibited by divalent cations different from calcium ions (cadmium, magnesium, manganese, zinc), since they act as competitive antagonists of this cofactor. Snake venom phospholipase A2 (PLA2) that induces in vivo myotoxicity, moderates footpad edema, and causes in vitro neuromuscular blockade. PLA2 catalyzes the calcium-dependent hydrolysis of the 2-acyl groups in 3-sn-phosphoglycerides. The polypeptide is Basic phospholipase A2 Ph-TX1 (Bothrocophias hyoprora (Amazonian hognose viper)).